The primary structure comprises 79 residues: MAKYQVTKTLDVRGEVCPVPDVETKRALQNMKPGEILEVWIDYPMSKERIPETVKKLGHEVLEIEEVGPSEWKIYIKVK.

Cys-17 functions as the Cysteine persulfide intermediate in the catalytic mechanism.

The protein belongs to the sulfur carrier protein TusA family.

This chain is Putative sulfur carrier protein TM_0983, found in Thermotoga maritima (strain ATCC 43589 / DSM 3109 / JCM 10099 / NBRC 100826 / MSB8).